We begin with the raw amino-acid sequence, 197 residues long: Recombination protein RecR (197 aa).

A C4-type zinc finger spans residues 57-72 (CSVCFALTEQNPCPIC). One can recognise a Toprim domain in the interval 79–174 (SVICVVETSQ…RVTRLAHGIP (96 aa)).

This sequence belongs to the RecR family.

Functionally, may play a role in DNA repair. It seems to be involved in an RecBC-independent recombinational process of DNA repair. It may act with RecF and RecO. The chain is Recombination protein RecR from Trichlorobacter lovleyi (strain ATCC BAA-1151 / DSM 17278 / SZ) (Geobacter lovleyi).